A 362-amino-acid polypeptide reads, in one-letter code: 4-hydroxy-3-methylbut-2-en-1-yl diphosphate synthase (flavodoxin) (362 aa).

Cys266, Cys269, Cys301, and Glu308 together coordinate [4Fe-4S] cluster.

Belongs to the IspG family. The cofactor is [4Fe-4S] cluster.

The enzyme catalyses (2E)-4-hydroxy-3-methylbut-2-enyl diphosphate + oxidized [flavodoxin] + H2O + 2 H(+) = 2-C-methyl-D-erythritol 2,4-cyclic diphosphate + reduced [flavodoxin]. It functions in the pathway isoprenoid biosynthesis; isopentenyl diphosphate biosynthesis via DXP pathway; isopentenyl diphosphate from 1-deoxy-D-xylulose 5-phosphate: step 5/6. Functionally, converts 2C-methyl-D-erythritol 2,4-cyclodiphosphate (ME-2,4cPP) into 1-hydroxy-2-methyl-2-(E)-butenyl 4-diphosphate. This Malacoplasma penetrans (strain HF-2) (Mycoplasma penetrans) protein is 4-hydroxy-3-methylbut-2-en-1-yl diphosphate synthase (flavodoxin).